The chain runs to 490 residues: Cytochrome P450 2C38 (490 aa).

An N-terminal signal peptide occupies residues 1-20 (MDLVTFLVLTLSSLILLSLW). Heme is bound at residue Cys435.

The protein belongs to the cytochrome P450 family. The cofactor is heme. As to expression, liver, brain, kidney, and intestine, with trace amounts in lung and heart.

Its subcellular location is the endoplasmic reticulum membrane. It localises to the microsome membrane. The catalysed reaction is an organic molecule + reduced [NADPH--hemoprotein reductase] + O2 = an alcohol + oxidized [NADPH--hemoprotein reductase] + H2O + H(+). It carries out the reaction (5Z,8Z,11Z,14Z)-eicosatetraenoate + reduced [NADPH--hemoprotein reductase] + O2 = 11,12-epoxy-(5Z,8Z,14Z)-eicosatrienoate + oxidized [NADPH--hemoprotein reductase] + H2O + H(+). The protein operates within lipid metabolism; arachidonate metabolism. A cytochrome P450 monooxygenase that primarily catalyzes the epoxidation of 11,12 double bond of (5Z,8Z,11Z,14Z)-eicosatetraenoic acid (arachidonate) forming 11,12-epoxyeicosatrienoic acid (11,12-EET) regioisomer. Mechanistically, uses molecular oxygen inserting one oxygen atom into a substrate, and reducing the second into a water molecule, with two electrons provided by NADPH via cytochrome P450 reductase (CPR; NADPH--hemoprotein reductase). The sequence is that of Cytochrome P450 2C38 from Mus musculus (Mouse).